A 488-amino-acid polypeptide reads, in one-letter code: ATP synthase subunit beta (488 aa).

164-171 (GGAGMGKT) is a binding site for ATP.

Belongs to the ATPase alpha/beta chains family. F-type ATPases have 2 components, CF(1) - the catalytic core - and CF(0) - the membrane proton channel. CF(1) has five subunits: alpha(3), beta(3), gamma(1), delta(1), epsilon(1). CF(0) has four main subunits: a(1), b(1), b'(1) and c(9-12).

The protein resides in the cellular thylakoid membrane. The catalysed reaction is ATP + H2O + 4 H(+)(in) = ADP + phosphate + 5 H(+)(out). Its function is as follows. Produces ATP from ADP in the presence of a proton gradient across the membrane. The catalytic sites are hosted primarily by the beta subunits. This chain is ATP synthase subunit beta, found in Synechococcus sp. (strain RCC307).